Here is a 289-residue protein sequence, read N- to C-terminus: tRNA dimethylallyltransferase (289 aa).

9–16 lines the ATP pocket; that stretch reads GTTASGKT. 11 to 16 is a binding site for substrate; it reads TASGKT. The segment at 34–37 is interaction with substrate tRNA; it reads DSLC.

It belongs to the IPP transferase family. Monomer. The cofactor is Mg(2+).

The enzyme catalyses adenosine(37) in tRNA + dimethylallyl diphosphate = N(6)-dimethylallyladenosine(37) in tRNA + diphosphate. Functionally, catalyzes the transfer of a dimethylallyl group onto the adenine at position 37 in tRNAs that read codons beginning with uridine, leading to the formation of N6-(dimethylallyl)adenosine (i(6)A). In Campylobacter jejuni subsp. jejuni serotype O:23/36 (strain 81-176), this protein is tRNA dimethylallyltransferase.